The chain runs to 321 residues: Glucokinase (321 aa).

8–13 (GDVGGT) is an ATP binding site.

This sequence belongs to the bacterial glucokinase family.

The protein resides in the cytoplasm. The catalysed reaction is D-glucose + ATP = D-glucose 6-phosphate + ADP + H(+). In terms of biological role, not highly important in E.coli as glucose is transported into the cell by the PTS system already as glucose 6-phosphate. This chain is Glucokinase, found in Escherichia coli O139:H28 (strain E24377A / ETEC).